The following is a 419-amino-acid chain: Heparan-sulfate 6-O-sulfotransferase 3-B (419 aa).

Topologically, residues 1-7 (MNDKPNK) are cytoplasmic. A helical; Signal-anchor for type II membrane protein membrane pass occupies residues 8 to 28 (WIFIPILAILFVMIGYQYVCP). Residues 29-419 (AGGQACHFRT…EDYASQVVRW (391 aa)) are Lumenal-facing. A glycan (N-linked (GlcNAc...) asparagine) is linked at Asn77. Position 101 to 109 (101 to 109 (HIQKTGGTT)) interacts with 3'-phosphoadenylyl sulfate. Substrate contacts are provided by residues 131-132 (KK), Arg148, Trp153, and His158. The active-site Proton acceptor is the His158. Arg191 and Ser199 together coordinate 3'-phosphoadenylyl sulfate. The substrate site is built by His203 and Trp210. N-linked (GlcNAc...) asparagine glycans are attached at residues Asn270 and Asn275. 323–325 (TQI) lines the 3'-phosphoadenylyl sulfate pocket. Asn326 carries N-linked (GlcNAc...) asparagine glycosylation. 329-330 (RA) is a binding site for 3'-phosphoadenylyl sulfate. 2 N-linked (GlcNAc...) asparagine glycosylation sites follow: Asn393 and Asn402.

Belongs to the sulfotransferase 6 family. As to expression, in early somitogenesis, expressed in presumptive forebrain and midbrain, tail bud and Kupffer's vesicle. During mid-somitogenesis, ubiquitous expression which is strongest in the somites and eye. During late somitogenesis, predominantly expressed in eye, hindbrain and ventral somites. At 24 hours post-fertilization (hpf), restricted to lens and neural retina, brain, otic vesicle and somites. At 36 hpf, brain expression is restricted to telencephalon. At 48 hpf, restricted to telencephalon and pectoral fin.

The protein resides in the membrane. It carries out the reaction alpha-D-glucosaminyl-[heparan sulfate](n) + 3'-phosphoadenylyl sulfate = 6-sulfo-alpha-D-glucosaminyl-[heparan sulfate](n) + adenosine 3',5'-bisphosphate + H(+). Functionally, 6-O-sulfation enzyme which catalyzes the transfer of sulfate from 3'-phosphoadenosine 5'-phosphosulfate (PAPS) to position 6 of the N-sulfoglucosamine residue (GlcNS) of heparan sulfate. The protein is Heparan-sulfate 6-O-sulfotransferase 3-B of Danio rerio (Zebrafish).